The primary structure comprises 482 residues: Anaerobic nitric oxide reductase flavorubredoxin (482 aa).

A zinc metallo-hydrolase region spans residues 30–210 (LRGSSYNSYL…PFSRLVTPKI (181 aa)). 6 residues coordinate Fe cation: His79, Glu81, Asp83, His147, Asp166, and His227. The Flavodoxin-like domain occupies 254–393 (ITIFYDTMSN…LCRQHGRDIA (140 aa)). FMN contacts are provided by residues 260-264 (TMSNN) and 342-369 (AFGS…EMSL). A Rubredoxin-like domain is found at 426–477 (GPSMQCSVCQWIYDPAKGEPLQDVAPGTPWSDVPDNFLCPECSLGKDVFDVL). Fe cation is bound by residues Cys431, Cys434, Cys464, and Cys467.

In the N-terminal section; belongs to the zinc metallo-hydrolase group 3 family. As to quaternary structure, homotetramer. Fe cation serves as cofactor. FMN is required as a cofactor.

The protein resides in the cytoplasm. It functions in the pathway nitrogen metabolism; nitric oxide reduction. Anaerobic nitric oxide reductase; uses NADH to detoxify nitric oxide (NO), protecting several 4Fe-4S NO-sensitive enzymes. Has at least 2 reductase partners, only one of which (NorW, flavorubredoxin reductase) has been identified. NO probably binds to the di-iron center; electrons enter from the NorW at rubredoxin and are transferred sequentially to the FMN center and the di-iron center. Also able to function as an aerobic oxygen reductase. In Citrobacter koseri (strain ATCC BAA-895 / CDC 4225-83 / SGSC4696), this protein is Anaerobic nitric oxide reductase flavorubredoxin.